Consider the following 214-residue polypeptide: Adenylate kinase (214 aa).

10–15 contacts ATP; sequence GSGKGT. Residues 30 to 59 form an NMP region; the sequence is STGDMLRAAVREGTPLGMEAKKIMDAGQLV. Residues T31, R36, 57 to 59, 85 to 88, and Q92 contribute to the AMP site; these read QLV and GFPR. Residues 122-159 are LID; sequence GRRVHPASGRTYHVVFNPPKVEGRDDETGEPLVQREDD. ATP contacts are provided by residues R123 and 132-133; that span reads TY. AMP is bound by residues R156 and R167. G200 lines the ATP pocket.

The protein belongs to the adenylate kinase family. In terms of assembly, monomer.

The protein resides in the cytoplasm. It catalyses the reaction AMP + ATP = 2 ADP. It functions in the pathway purine metabolism; AMP biosynthesis via salvage pathway; AMP from ADP: step 1/1. Catalyzes the reversible transfer of the terminal phosphate group between ATP and AMP. Plays an important role in cellular energy homeostasis and in adenine nucleotide metabolism. In Methylococcus capsulatus (strain ATCC 33009 / NCIMB 11132 / Bath), this protein is Adenylate kinase.